Reading from the N-terminus, the 951-residue chain is Plasma membrane ATPase (951 aa).

The next 4 membrane-spanning stretches (helical) occupy residues 61–81, 93–113, 243–263, and 277–297; these read FLGF…IMAI, WEDF…SFIE, IGNF…IVMF, and LLVL…SVTM. Catalysis depends on D329, which acts as the 4-aspartylphosphate intermediate. 2 residues coordinate Mg(2+): D588 and D592. 6 helical membrane passes run 647-667, 671-691, 709-729, 752-772, 785-805, and 814-834; these read IYAV…ALIW, FSPF…MTIS, IFAT…IFFW, EMMS…IFVT, LLLV…AVYA, and GIGW…YFPL.

The protein belongs to the cation transport ATPase (P-type) (TC 3.A.3) family. Type IIIA subfamily.

It localises to the cell membrane. The catalysed reaction is ATP + H2O + H(+)(in) = ADP + phosphate + 2 H(+)(out). Functionally, the plasma membrane ATPase of plants and fungi is a hydrogen ion pump. The proton gradient it generates drives the active transport of nutrients by H(+)-symport. The resulting external acidification and/or internal alkinization may mediate growth responses. The polypeptide is Plasma membrane ATPase (Oryza sativa subsp. japonica (Rice)).